The following is a 201-amino-acid chain: Transgelin (201 aa).

N-acetylalanine is present on A2. Positions 24-137 constitute a Calponin-homology (CH) domain; it reads EELEERLVEW…RTVMALGSLA (114 aa). The tract at residues 154–161 is could be involved in actin-binding; the sequence is KKAQEHKR. A Phosphoserine modification is found at S166. The residue at position 172 (K172) is an N6-acetyllysine. A Calponin-like repeat occupies 175–200; the sequence is IGLQMGSNRGASQAGMTGYGRPRQII. Phosphoserine is present on S181. R183 carries the omega-N-methylarginine modification.

It belongs to the calponin family. In terms of tissue distribution, smooth muscle and mesenchymal cells but not in skeletal muscle or lymphocytes.

The protein resides in the cytoplasm. In terms of biological role, actin cross-linking/gelling protein. This chain is Transgelin (Tagln), found in Rattus norvegicus (Rat).